The chain runs to 1557 residues: Probable kinase PglW (1557 aa).

The region spanning 12 to 130 (SEFEHERRGL…VAEAVCFTDN (119 aa)) is the NERD domain. 2 consecutive Protein kinase domains span residues 195-490 (ELER…LEVV) and 530-816 (WEVR…KVFL). ATP contacts are provided by residues 536–544 (LGTGSTSRA) and Lys564. Disordered stretches follow at residues 615–634 (DERDDDGPGAEGATRPRRRE) and 821–861 (TVPS…QRDR). A compositionally biased stretch (low complexity) spans 830–849 (PAAPADGAAPAEGAAAGIAD).

It belongs to the protein kinase superfamily. Ser/Thr protein kinase family.

Functionally, BREX systems (bacteriophage exclusion) provide immunity against bacteriophage. Part of a type 2 BREX system. Previously called the phage growth limitation (Pgl) system, it confers protection against bacteriophage phiC31. The bacteria allows one cycle of phage infection, but subsequent cycles are impaired, protecting the original bacterial colony. The system undergoes high rates (10(-3) to 10(-4)) of phase reversion, i.e. loss and regain of phiC31 resistance. When the pglW-pglX-pglY-pglZ genes are transformed into a susceptible S.lividans (strain 1326) they confer resistance to infection by phage phiC31 and phiBT1; all 4 genes are necessary. The proteins has kinase domains and might bind DNA. Its function is as follows. Autophosphorylates when synthesized in vitro, cannot be expressed in E.coli. In Streptomyces coelicolor (strain ATCC BAA-471 / A3(2) / M145), this protein is Probable kinase PglW.